Here is a 311-residue protein sequence, read N- to C-terminus: Tyrosine recombinase XerD (311 aa).

Residues 1–83 (MEFIAQFLEM…TIKSYYAFLI (83 aa)) form the Core-binding (CB) domain. Residues 104 to 299 (KLPIILSIDQ…HTNHLKKALL (196 aa)) enclose the Tyr recombinase domain. Catalysis depends on residues R145, K176, H251, R254, and H277. Y286 acts as the O-(3'-phospho-DNA)-tyrosine intermediate in catalysis.

Belongs to the 'phage' integrase family. XerD subfamily. In terms of assembly, forms a cyclic heterotetrameric complex composed of two molecules of XerC and two molecules of XerD.

It localises to the cytoplasm. In terms of biological role, site-specific tyrosine recombinase, which acts by catalyzing the cutting and rejoining of the recombining DNA molecules. The XerC-XerD complex is essential to convert dimers of the bacterial chromosome into monomers to permit their segregation at cell division. It also contributes to the segregational stability of plasmids. The polypeptide is Tyrosine recombinase XerD (Rickettsia prowazekii (strain Madrid E)).